The sequence spans 211 residues: tRNA (pseudouridine(54)-N(1))-methyltransferase (211 aa).

Residues Leu128, Gly150, and Cys183 each contribute to the S-adenosyl-L-methionine site.

Belongs to the methyltransferase superfamily. TrmY family. As to quaternary structure, homodimer.

It localises to the cytoplasm. The enzyme catalyses pseudouridine(54) in tRNA + S-adenosyl-L-methionine = N(1)-methylpseudouridine(54) in tRNA + S-adenosyl-L-homocysteine + H(+). Specifically catalyzes the N1-methylation of pseudouridine at position 54 (Psi54) in tRNAs. This chain is tRNA (pseudouridine(54)-N(1))-methyltransferase, found in Methanosarcina acetivorans (strain ATCC 35395 / DSM 2834 / JCM 12185 / C2A).